The chain runs to 375 residues: MSCPVIELTQQLIRRPSLSPDDAGCQALLIERLQAIGFTVERMDFADTQNFWAWRGQGETLAFAGHTDVVPPGDADRWINPPFEPTIRDGMLFGRGAADMKGSLAAMVVAAERFVAQHPNHAGRLAFLITSDEEASAHNGTVKVVEALMARNERLDYCLVGEPSSIEVVGDVVKNGRRGSLTCNLTIHGVQGHVAYPHLADNPVHRAAPFLNELVAIEWDQGNEFFPATSMQIANIQAGTGSNNVIPGELFVQFNFRFSTELTDEMIKAQVLALLEKHQLRYTVEWWLSGQPFLTARGKLVDAVVNAVEHYNEIKPQLLTTGGTSDGRFIARMGAQVVELGPVNATIHKINECVNAADLQLLARMYQRIMEQLVA.

H66 provides a ligand contact to Zn(2+). D68 is an active-site residue. Residue D99 participates in Zn(2+) binding. Residue E133 is the Proton acceptor of the active site. Zn(2+) is bound by residues E134, E162, and H348.

This sequence belongs to the peptidase M20A family. DapE subfamily. In terms of assembly, homodimer. Zn(2+) serves as cofactor. Co(2+) is required as a cofactor.

The enzyme catalyses N-succinyl-(2S,6S)-2,6-diaminopimelate + H2O = (2S,6S)-2,6-diaminopimelate + succinate. It participates in amino-acid biosynthesis; L-lysine biosynthesis via DAP pathway; LL-2,6-diaminopimelate from (S)-tetrahydrodipicolinate (succinylase route): step 3/3. Catalyzes the hydrolysis of N-succinyl-L,L-diaminopimelic acid (SDAP), forming succinate and LL-2,6-diaminopimelate (DAP), an intermediate involved in the bacterial biosynthesis of lysine and meso-diaminopimelic acid, an essential component of bacterial cell walls. The protein is Succinyl-diaminopimelate desuccinylase of Escherichia coli O17:K52:H18 (strain UMN026 / ExPEC).